Consider the following 489-residue polypeptide: Rhamnulokinase (489 aa).

Residue 13-17 (ASSGR) participates in ATP binding. An intrachain disulfide couples Cys-68 to Cys-222. Residues Gly-83 and 236-238 (HDT) each bind substrate. Asp-237 functions as the Proton acceptor in the catalytic mechanism. Position 259 (Thr-259) interacts with ATP. Residue Asn-296 participates in substrate binding. Gln-304 is an ATP binding site. A disulfide bridge connects residues Cys-353 and Cys-370. Gly-402 is an ATP binding site. Cys-413 and Cys-417 form a disulfide bridge.

The protein belongs to the rhamnulokinase family. In terms of assembly, monomer. Requires Mg(2+) as cofactor.

The catalysed reaction is L-rhamnulose + ATP = L-rhamnulose 1-phosphate + ADP + H(+). Its pathway is carbohydrate degradation; L-rhamnose degradation; glycerone phosphate from L-rhamnose: step 2/3. In terms of biological role, involved in the catabolism of L-rhamnose (6-deoxy-L-mannose). Catalyzes the transfer of the gamma-phosphate group from ATP to the 1-hydroxyl group of L-rhamnulose to yield L-rhamnulose 1-phosphate. The polypeptide is Rhamnulokinase (Escherichia coli O157:H7).